Reading from the N-terminus, the 268-residue chain is Nickel import ATP-binding protein NikE (268 aa).

Positions 4-252 constitute an ABC transporter domain; it reads LNVSDLSHHY…SSDAGRVLQN (249 aa). 45 to 52 lines the ATP pocket; the sequence is GRSGCGKS.

It belongs to the ABC transporter superfamily. Nickel importer (TC 3.A.1.5.3) family. In terms of assembly, the complex is composed of two ATP-binding proteins (NikD and NikE), two transmembrane proteins (NikB and NikC) and a solute-binding protein (NikA).

Its subcellular location is the cell inner membrane. It carries out the reaction Ni(2+)(out) + ATP + H2O = Ni(2+)(in) + ADP + phosphate + H(+). In terms of biological role, part of the ABC transporter complex NikABCDE involved in nickel import. Responsible for energy coupling to the transport system. In Escherichia coli O157:H7, this protein is Nickel import ATP-binding protein NikE.